We begin with the raw amino-acid sequence, 208 residues long: AN1-type zinc finger protein 6 (208 aa).

The A20-type zinc finger occupies 8-42 (SQVPMLCSTGCGFYGNPRTNGMCSVCYKEHLQRQN). Zn(2+)-binding residues include Cys-14, Cys-18, Cys-30, and Cys-33. Polar residues predominate over residues 41–68 (QNSSNGRISPPATSVSSLSESLPVQCTD). A disordered region spans residues 41–140 (QNSSNGRISP…PSEEQSKSLE (100 aa)). Ser-49 is subject to Phosphoserine. Residues 80–94 (STSSSMQPSPVSNQS) show a composition bias toward low complexity. 2 stretches are compositionally biased toward polar residues: residues 95-110 (LLSE…STSV) and 120-133 (VQAS…QPSE). Residues 143–189 (KQKKNRCFMCRKKVGLTGFECRCGNVYCGVHRYSDVHNCSYNYKADA) form an AN1-type zinc finger. 8 residues coordinate Zn(2+): Cys-149, Cys-152, Cys-163, Cys-165, Cys-170, His-173, His-179, and Cys-181. Lys-204 carries the post-translational modification N6-acetyllysine.

As to quaternary structure, interacts with PKN1. Interacts with TRAF2. Interacts with mono- and polyubiquitin. Interacts with PEX6. Interacts with PEX5 (Cys-linked ubiquitinated). In terms of tissue distribution, widely expressed with high level in heart, skeletal muscle, liver, kidney and placenta.

The protein localises to the cytoplasm. In terms of biological role, involved in regulation of TNF-alpha induced NF-kappa-B activation and apoptosis. Involved in modulation of 'Lys-48'-linked polyubiquitination status of TRAF2 and decreases association of TRAF2 with RIPK1. Required for PTS1 target sequence-dependent protein import into peroxisomes and PEX5 stability; may cooperate with PEX6. In vitro involved in PEX5 export from the cytosol to peroxisomes. This chain is AN1-type zinc finger protein 6 (ZFAND6), found in Homo sapiens (Human).